A 187-amino-acid polypeptide reads, in one-letter code: Reactive Intermediate Deaminase A, chloroplastic (187 aa).

The N-terminal 58 residues, 1-58, are a transit peptide targeting the chloroplast; the sequence is MTWSVFRSINTPTLDLSTALRSTRTPLVAAGVGCATFAGVSLFRMSSRSPPFASLSVS. R165 contributes to the substrate binding site.

This sequence belongs to the RutC family. In terms of tissue distribution, expressed in leaves, petiols, petals, carpels and shoot apex.

The protein localises to the plastid. Its subcellular location is the chloroplast. It catalyses the reaction 2-iminobutanoate + H2O = 2-oxobutanoate + NH4(+). The enzyme catalyses 2-iminopropanoate + H2O = pyruvate + NH4(+). It functions in the pathway amino-acid biosynthesis; L-isoleucine biosynthesis; 2-oxobutanoate from L-threonine. Functionally, hydrolyzes the Ser-derived enamine/imine product of Thr dehydratase, protecting the plastidial branched-chain aminotransferase BCAT3 (AC Q9M401) from inactivation. Involved in Ile biosynthesis. This Arabidopsis thaliana (Mouse-ear cress) protein is Reactive Intermediate Deaminase A, chloroplastic.